Here is a 568-residue protein sequence, read N- to C-terminus: Kelch-like protein 12 (568 aa).

The region spanning 33 to 100 (CDVTLRVEQK…VYTETVHVTV (68 aa)) is the BTB domain. The region spanning 135–236 (CLGIRDFAET…LTPRYITDVI (102 aa)) is the BACK domain. 6 Kelch repeats span residues 282 to 329 (VLLV…SLHD), 331 to 379 (IYVI…TLGD), 380 to 426 (MIYV…VASG), 427 to 473 (IIYC…LLND), 475 to 520 (IYVV…VLRG), and 522 to 567 (LYAI…VLRE). The segment at 405-568 (QWSMLGDMQT…DAGVCVLREK (164 aa)) is interaction with DVL3.

As to quaternary structure, component of the BCR(KLHL12) E3 ubiquitin ligase complex, at least composed of CUL3 and KLHL12 and RBX1. This complex interacts with DVL3 upon activation of the Wnt signaling pathway by WNT3A. Interacts with DRD4, KLHL2 and SEC31A. Interacts with PEF1 and PDCD6/ALG-2; interaction takes place in response to cytosolic calcium increase and leads to bridge together the BCR(KLHL12) complex and SEC31 (SEC31A or SEC31B). In terms of processing, ubiquitinated by the SCF(FBXL17) complex, leading to its degradation by the proteasome: ubiquitination by the SCF(FBXL17) complex takes place when aberrant BTB domain dimers are formed.

Its subcellular location is the cytoplasmic vesicle. The protein localises to the COPII-coated vesicle. Its pathway is protein modification; protein ubiquitination. Its function is as follows. Substrate-specific adapter of a BCR (BTB-CUL3-RBX1) E3 ubiquitin ligase complex that acts as a negative regulator of Wnt signaling pathway and ER-Golgi transport. The BCR(KLHL12) complex is involved in ER-Golgi transport by regulating the size of COPII coats, thereby playing a key role in collagen export, which is required for embryonic stem (ES) cells division: BCR(KLHL12) acts by mediating monoubiquitination of SEC31 (SEC31A or SEC31B). The BCR(KLHL12) complex is also involved in neural crest specification: in response to cytosolic calcium increase, interacts with the heterodimer formed with PEF1 and PDCD6/ALG-2, leading to bridge together the BCR(KLHL12) complex and SEC31 (SEC31A or SEC31B), promoting monoubiquitination of SEC31 and subsequent collagen export. As part of the BCR(KLHL12) complex, also acts as a negative regulator of the Wnt signaling pathway by mediating ubiquitination and subsequent proteolysis of DVL3. The BCR(KLHL12) complex also mediates polyubiquitination of DRD4 and PEF1, without leading to degradation of these proteins. This is Kelch-like protein 12 (Klhl12) from Rattus norvegicus (Rat).